Consider the following 71-residue polypeptide: Serine palmitoyltransferase small subunit A (71 aa).

The Cytoplasmic portion of the chain corresponds to 1 to 12 (MAGMALARAWKQ). Residues 13 to 29 (MSWFYYQYLLVTALYML) traverse the membrane as a helical segment. Over 30–34 (EPWER) the chain is Lumenal. The helical transmembrane segment at 35-57 (TVFNSMLVSVVGMALYTGYVFMP) threads the bilayer. Residues 58 to 71 (QHIMAILHYFEIVQ) are Cytoplasmic-facing.

Belongs to the SPTSS family. SPTSSA subfamily. In terms of assembly, component of the serine palmitoyltransferase (SPT) complex, which is composed of SPTLC1, SPTLC2 or SPTLC3 and SPTSSA or SPTSSB. The heterodimer consisting of SPTLC1 and SPTLC2/SPTLC3 forms the catalytic core of the enzyme, while SPTSSA or SPTSSB subunits determine substrate specificity. SPT also interacts with ORMDL proteins, especially ORMDL3, which negatively regulate SPT activity in the presence of ceramides. Interacts with MBOAT7; the interaction plays a role in MBOAT7 localization to mitochondria-associated membranes.

Its subcellular location is the endoplasmic reticulum membrane. Its pathway is lipid metabolism; sphingolipid metabolism. Its function is as follows. Component of the serine palmitoyltransferase multisubunit enzyme (SPT) that catalyzes the initial and rate-limiting step in sphingolipid biosynthesis by condensing L-serine and activated acyl-CoA (most commonly palmitoyl-CoA) to form long-chain bases. The SPT complex is composed of SPTLC1, SPTLC2 or SPTLC3 and SPTSSA or SPTSSB. Within this complex, the heterodimer consisting of SPTLC1 and SPTLC2/SPTLC3 forms the catalytic core. Within the SPT complex, SPTSSA stimulates the catalytic activity and plays a role in substrate specificity, which depends upon the overall complex composition. The SPTLC1-SPTLC2-SPTSSA complex shows a strong preference for C16-CoA substrate, while the SPTLC1-SPTLC3-SPTSSA isozyme uses both C14-CoA and C16-CoA as substrates, with a slight preference for C14-CoA. Independently of its action as a SPT component, may be involved in MBOAT7 localization to mitochondria-associated membranes, a membrane bridge between the endoplasmic reticulum and mitochondria, may hence affect MBOAT7-catalyzed incorporation of arachidonic acid into phosphatidylinositol. The chain is Serine palmitoyltransferase small subunit A from Mus musculus (Mouse).